The following is a 365-amino-acid chain: tRNA/tmRNA (uracil-C(5))-methyltransferase (365 aa).

Residues glutamine 189, tyrosine 217, asparagine 222, glutamate 238, and aspartate 298 each coordinate S-adenosyl-L-methionine. The Nucleophile role is filled by cysteine 323. Glutamate 357 (proton acceptor) is an active-site residue.

This sequence belongs to the class I-like SAM-binding methyltransferase superfamily. RNA M5U methyltransferase family. TrmA subfamily.

The catalysed reaction is uridine(54) in tRNA + S-adenosyl-L-methionine = 5-methyluridine(54) in tRNA + S-adenosyl-L-homocysteine + H(+). The enzyme catalyses uridine(341) in tmRNA + S-adenosyl-L-methionine = 5-methyluridine(341) in tmRNA + S-adenosyl-L-homocysteine + H(+). Dual-specificity methyltransferase that catalyzes the formation of 5-methyluridine at position 54 (m5U54) in all tRNAs, and that of position 341 (m5U341) in tmRNA (transfer-mRNA). This chain is tRNA/tmRNA (uracil-C(5))-methyltransferase, found in Shewanella sp. (strain MR-4).